A 314-amino-acid polypeptide reads, in one-letter code: Ribonuclease Z (314 aa).

Positions 62, 64, 66, 67, 139, 210, and 268 each coordinate Zn(2+). Asp66 serves as the catalytic Proton acceptor.

It belongs to the RNase Z family. As to quaternary structure, homodimer. It depends on Zn(2+) as a cofactor.

The catalysed reaction is Endonucleolytic cleavage of RNA, removing extra 3' nucleotides from tRNA precursor, generating 3' termini of tRNAs. A 3'-hydroxy group is left at the tRNA terminus and a 5'-phosphoryl group is left at the trailer molecule.. Functionally, zinc phosphodiesterase, which displays some tRNA 3'-processing endonuclease activity. Probably involved in tRNA maturation, by removing a 3'-trailer from precursor tRNA. In Acaryochloris marina (strain MBIC 11017), this protein is Ribonuclease Z.